The following is a 459-amino-acid chain: Argininosuccinate lyase (459 aa).

It belongs to the lyase 1 family. Argininosuccinate lyase subfamily.

The protein resides in the cytoplasm. The enzyme catalyses 2-(N(omega)-L-arginino)succinate = fumarate + L-arginine. It functions in the pathway amino-acid biosynthesis; L-arginine biosynthesis; L-arginine from L-ornithine and carbamoyl phosphate: step 3/3. In Staphylococcus aureus (strain Mu3 / ATCC 700698), this protein is Argininosuccinate lyase.